The chain runs to 354 residues: Malate dehydrogenase 1, peroxisomal (354 aa).

Residues 6 to 14 (RIARISAHL) are peroxisomal targeting signal PTS2. Residues 49–55 (GAAGGIG) and Asp75 each bind NAD(+). Substrate is bound by residues Arg122 and Arg128. NAD(+) contacts are provided by residues Asn135 and 158–160 (ISN). 2 residues coordinate substrate: Asn160 and Arg194. Catalysis depends on His218, which acts as the Proton acceptor. NAD(+) is bound at residue Met269.

The protein belongs to the LDH/MDH superfamily. MDH type 1 family. As to quaternary structure, homodimer. As to expression, expressed in rosette leaves at low levels.

It localises to the peroxisome. It carries out the reaction (S)-malate + NAD(+) = oxaloacetate + NADH + H(+). Catalyzes a reversible NAD-dependent dehydrogenase reaction involved in central metabolism and redox homeostasis between organelle compartments. Peroxisomal NAD-dependent malate dehydrogenase involved in fatty acid beta-oxidation. Reoxidizes NADH from the beta-oxidation and provides NAD for the conversion of fatty acyl-CoA to acetyl-CoA. Does not participate directly in the glyoxylate cycle. Required for maintenance of photosynthetic rates under photorespiratory conditions, and carbon flow during photorespiration. Supplies NADH reductant to the peroxisomal hydroxypyruvate reductase (HPR), which reduces hydroxypyruvate into glycerate in the photorespiratory cycle. This is Malate dehydrogenase 1, peroxisomal from Arabidopsis thaliana (Mouse-ear cress).